Reading from the N-terminus, the 77-residue chain is Small ribosomal subunit protein uS4 (77 aa).

The disordered stretch occupies residues 45-77 (PFGGGRPGRVKRKNQKAAAKKASGGDGDEEDEE). Basic residues predominate over residues 52–63 (GRVKRKNQKAAA).

This sequence belongs to the universal ribosomal protein uS4 family.

The sequence is that of Small ribosomal subunit protein uS4 (RPS9) from Nicotiana tabacum (Common tobacco).